A 332-amino-acid polypeptide reads, in one-letter code: MIIVTGGAGMIGSAFVWKLNEMGIKDILIVDKLRKEDKWLNIRKREYYDWIDKDNLKEWLVCKENADNIEAVIHMGACSATTETDADFLMDNNFGYTKFLWNFCAEKNIKYIYASSAATYGMGELGYNDDVSPEELQKLMPLNKYGYSKKFFDDWAFKQKNQPKQWNGLKFFNVYGPQEYHKGRMASMVFHTYNQYKENGYVKLFKSYKEGFKDGEQLRDFVYVKDVVDIMYFMLVNDVKSGIYNIGTGKARSFMDLSMATMRAASHNDNLDKNEVVKLIEMPEDLQGRYQYFTEAKINKLREIGYTKEMHSLEEGVKDYVQNYLAKEDSYL.

NADP(+) contacts are provided by residues 10–11 (MI), 31–32 (DK), lysine 38, lysine 53, 75–79 (MGACS), and asparagine 92. Residue tyrosine 145 is the Proton acceptor of the active site. Lysine 149 contributes to the NADP(+) binding site. Asparagine 173 lines the substrate pocket. NADP(+) contacts are provided by valine 174 and lysine 182. Lysine 182 (proton acceptor) is an active-site residue. Substrate contacts are provided by residues arginine 184, histidine 191, 205–208 (FKSY), arginine 219, and tyrosine 290.

Belongs to the NAD(P)-dependent epimerase/dehydratase family. HldD subfamily. As to quaternary structure, homopentamer. It depends on NADP(+) as a cofactor.

It catalyses the reaction ADP-D-glycero-beta-D-manno-heptose = ADP-L-glycero-beta-D-manno-heptose. It participates in nucleotide-sugar biosynthesis; ADP-L-glycero-beta-D-manno-heptose biosynthesis; ADP-L-glycero-beta-D-manno-heptose from D-glycero-beta-D-manno-heptose 7-phosphate: step 4/4. Its function is as follows. Catalyzes the interconversion between ADP-D-glycero-beta-D-manno-heptose and ADP-L-glycero-beta-D-manno-heptose via an epimerization at carbon 6 of the heptose. This chain is ADP-L-glycero-D-manno-heptose-6-epimerase, found in Fusobacterium nucleatum subsp. nucleatum (strain ATCC 25586 / DSM 15643 / BCRC 10681 / CIP 101130 / JCM 8532 / KCTC 2640 / LMG 13131 / VPI 4355).